The following is a 220-amino-acid chain: Cytidylate kinase (220 aa).

An ATP-binding site is contributed by 9–17 (GPAASGKST).

Belongs to the cytidylate kinase family. Type 1 subfamily.

It is found in the cytoplasm. The enzyme catalyses CMP + ATP = CDP + ADP. The catalysed reaction is dCMP + ATP = dCDP + ADP. This Thermotoga petrophila (strain ATCC BAA-488 / DSM 13995 / JCM 10881 / RKU-1) protein is Cytidylate kinase.